We begin with the raw amino-acid sequence, 113 residues long: Mediator of RNA polymerase II transcription subunit 22 (113 aa).

Belongs to the Mediator complex subunit 22 family. As to quaternary structure, component of the Mediator complex.

It is found in the nucleus. In terms of biological role, component of the Mediator complex, a coactivator involved in the regulated transcription of nearly all RNA polymerase II-dependent genes. Mediator functions as a bridge to convey information from gene-specific regulatory proteins to the basal RNA polymerase II transcription machinery. Mediator is recruited to promoters by direct interactions with regulatory proteins and serves as a scaffold for the assembly of a functional preinitiation complex with RNA polymerase II and the general transcription factors. The sequence is that of Mediator of RNA polymerase II transcription subunit 22 (SRB6) from Candida glabrata (strain ATCC 2001 / BCRC 20586 / JCM 3761 / NBRC 0622 / NRRL Y-65 / CBS 138) (Yeast).